We begin with the raw amino-acid sequence, 1105 residues long: KAT8 regulatory NSL complex subunit 1 (1105 aa).

At K104 the chain carries N6-acetyllysine. Disordered stretches follow at residues 145–211 (GQTA…CTLP) and 225–263 (NNST…GVKL). Positions 225–258 (NNSTANKSSVNSMEQPALQGSSRLSPGTDSSSNL) are enriched in polar residues. A Phosphoserine modification is found at S249. K262 participates in a covalent cross-link: Glycyl lysine isopeptide (Lys-Gly) (interchain with G-Cter in SUMO2). Position 268 is a phosphoserine (S268). Positions 283–314 (RITALLRRQADIESRARRLQKRLQVVQAKQVE) form a coiled coil. A Glycyl lysine isopeptide (Lys-Gly) (interchain with G-Cter in SUMO2) cross-link involves residue K331. Disordered regions lie at residues 399-426 (DSDV…PEQR) and 733-857 (TAKL…RRGE). Basic and acidic residues-rich tracts occupy residues 741-753 (TRPD…HLDD) and 780-804 (DPNH…HHTD). The span at 827 to 850 (STSSDSPAPASSSSQVTASTSQQP) shows a compositional bias: low complexity. Positions 850 to 882 (PVRRRRGESSFDINNIVIPMSVAATTRVEKLQY) are required for activation of KAT8 histone acetyltransferase activity. The PEHE domain occupies 884–1035 (EILTPSWREV…GLDEQSVQPW (152 aa)). Positions 910 to 928 (EDLSDAAFAALHAKCEEME) are interaction with KAT8 HAT domain. A disordered region spans residues 938 to 1034 (VPPQRRGSRS…LGLDEQSVQP (97 aa)). The span at 955 to 965 (TTPQLGSANPS) shows a compositional bias: polar residues. Residues 975–988 (SSSHSLSEYSHGQS) show a composition bias toward low complexity. S991 and S994 each carry phosphoserine. T1003 is subject to Phosphothreonine. Residues 1008–1019 (DTPRHLASEDTR) are compositionally biased toward basic and acidic residues. At S1045 the chain carries Phosphoserine. The disordered stretch occupies residues 1058 to 1105 (ERAARCTRRTSGSKTGRETEAAPTSPPIVPLKSRHLVAAATAQRPTHR).

As to quaternary structure, component of the NSL complex at least composed of MOF/KAT8, KANSL1, KANSL2, KANSL3, MCRS1, PHF20, OGT1/OGT, WDR5 and HCFC1. Interacts (via PEHE domain) with KAT8 (via HAT domain); the interaction is direct. Component of some MLL1/MLL complex, at least composed of the core components KMT2A/MLL1, ASH2L, HCFC1, WDR5 and RBBP5, as well as the facultative components BACC1, CHD8, E2F6, HSP70, INO80C, KANSL1, LAS1L, MAX, MCRS1, MGA, KAT8/MOF, PELP1, PHF20, PRP31, RING2, RUVB1/TIP49A, RUVB2/TIP49B, SENP3, TAF1, TAF4, TAF6, TAF7, TAF9 and TEX10. In terms of tissue distribution, expressed in the brain.

The protein resides in the nucleus. It is found in the chromosome. The protein localises to the centromere. Its subcellular location is the kinetochore. It localises to the mitochondrion. The protein resides in the cytoplasm. It is found in the cytoskeleton. The protein localises to the spindle pole. Non-catalytic component of the NSL histone acetyltransferase complex, a multiprotein complex that mediates histone H4 acetylation at 'Lys-5'- and 'Lys-8' (H4K5ac and H4K8ac) at transcription start sites and promotes transcription initiation. The NSL complex also acts as a regulator of gene expression in mitochondria. In addition to its role in transcription, KANSL1 also plays an essential role in spindle assembly during mitosis. Associates with microtubule ends and contributes to microtubule stability. The protein is KAT8 regulatory NSL complex subunit 1 (KANSL1) of Homo sapiens (Human).